A 156-amino-acid polypeptide reads, in one-letter code: Small ribosomal subunit protein uS7 (156 aa).

Belongs to the universal ribosomal protein uS7 family. In terms of assembly, part of the 30S ribosomal subunit. Contacts proteins S9 and S11.

Functionally, one of the primary rRNA binding proteins, it binds directly to 16S rRNA where it nucleates assembly of the head domain of the 30S subunit. Is located at the subunit interface close to the decoding center, probably blocks exit of the E-site tRNA. In Nitratidesulfovibrio vulgaris (strain DSM 19637 / Miyazaki F) (Desulfovibrio vulgaris), this protein is Small ribosomal subunit protein uS7.